We begin with the raw amino-acid sequence, 748 residues long: LPS-assembly protein LptD (748 aa).

The N-terminal stretch at 1–19 (MSKTWGILMLSVLSAPSLA) is a signal peptide.

This sequence belongs to the LptD family. As to quaternary structure, component of the lipopolysaccharide transport and assembly complex. Interacts with LptE and LptA.

The protein resides in the cell outer membrane. Functionally, together with LptE, is involved in the assembly of lipopolysaccharide (LPS) at the surface of the outer membrane. This is LPS-assembly protein LptD from Pseudoalteromonas translucida (strain TAC 125).